Reading from the N-terminus, the 254-residue chain is tRNA (guanine-N(7)-)-methyltransferase (254 aa).

Positions 82, 107, 134, and 157 each coordinate S-adenosyl-L-methionine. Residue aspartate 157 is part of the active site. Substrate-binding positions include lysine 161, aspartate 193, and 233–236; that span reads TKFE.

This sequence belongs to the class I-like SAM-binding methyltransferase superfamily. TrmB family.

The catalysed reaction is guanosine(46) in tRNA + S-adenosyl-L-methionine = N(7)-methylguanosine(46) in tRNA + S-adenosyl-L-homocysteine. It participates in tRNA modification; N(7)-methylguanine-tRNA biosynthesis. Functionally, catalyzes the formation of N(7)-methylguanine at position 46 (m7G46) in tRNA. The chain is tRNA (guanine-N(7)-)-methyltransferase from Corynebacterium jeikeium (strain K411).